A 268-amino-acid chain; its full sequence is Ribonuclease P protein subunit p30 (268 aa).

Ala-2 is modified (N-acetylalanine). At Ser-251 the chain carries Phosphoserine.

It belongs to the eukaryotic/archaeal RNase P protein component 3 family. Component of nuclear RNase P and RNase MRP ribonucleoproteins. RNase P consists of a catalytic RNA moiety and about 10 protein subunits; POP1, POP4, POP5, POP7, RPP14, RPP21, RPP25, RPP30, RPP38 and RPP40. Within the RNase P complex, POP1, POP7 and RPP25 form the 'finger' subcomplex, POP5, RPP14, RPP40 and homodimeric RPP30 form the 'palm' subcomplex, and RPP21, POP4 and RPP38 form the 'wrist' subcomplex. All subunits of the RNase P complex interact with the catalytic RNA. Several subunits of RNase P are also part of the RNase MRP complex. RNase MRP consists of a catalytic RNA moiety and about 8 protein subunits; POP1, POP7, RPP25, RPP30, RPP38, RPP40 and possibly also POP4 and POP5.

Its subcellular location is the nucleus. The protein localises to the nucleolus. Functionally, component of ribonuclease P, a ribonucleoprotein complex that generates mature tRNA molecules by cleaving their 5'-ends. Also a component of the MRP ribonuclease complex, which cleaves pre-rRNA sequences. This Bos taurus (Bovine) protein is Ribonuclease P protein subunit p30 (RPP30).